Reading from the N-terminus, the 166-residue chain is Large ribosomal subunit protein uL10 (166 aa).

It belongs to the universal ribosomal protein uL10 family. As to quaternary structure, part of the ribosomal stalk of the 50S ribosomal subunit. The N-terminus interacts with L11 and the large rRNA to form the base of the stalk. The C-terminus forms an elongated spine to which L12 dimers bind in a sequential fashion forming a multimeric L10(L12)X complex.

Forms part of the ribosomal stalk, playing a central role in the interaction of the ribosome with GTP-bound translation factors. In Shewanella sediminis (strain HAW-EB3), this protein is Large ribosomal subunit protein uL10.